The following is a 105-amino-acid chain: Putative pterin-4-alpha-carbinolamine dehydratase (105 aa).

This sequence belongs to the pterin-4-alpha-carbinolamine dehydratase family.

The catalysed reaction is (4aS,6R)-4a-hydroxy-L-erythro-5,6,7,8-tetrahydrobiopterin = (6R)-L-erythro-6,7-dihydrobiopterin + H2O. The polypeptide is Putative pterin-4-alpha-carbinolamine dehydratase (Sinorhizobium medicae (strain WSM419) (Ensifer medicae)).